The chain runs to 476 residues: Protein transport protein Sec61 subunit alpha isoform B (476 aa).

Residues 2–33 lie on the Cytoplasmic side of the membrane; that stretch reads GIKFLEVIKPFCAVLPEIQKPERKIQFREKVL. A helical membrane pass occupies residues 34 to 53; it reads WTAITLFIFLVCCQIPLFGI. Residues 54 to 76 are Lumenal-facing; the sequence is MSSDSADPFYWMRVILASNRGTL. The chain crosses the membrane as a helical span at residues 77–96; it reads MELGISPIVTSGLIMQLLAG. Residues 97–117 lie on the Cytoplasmic side of the membrane; the sequence is AKIIEVGDTPKDRALFNGAQK. The chain crosses the membrane as a helical span at residues 118 to 138; sequence LFGMIITIGQAIVYVMTGMYG. Residues 139 to 144 lie on the Lumenal side of the membrane; that stretch reads DPSDMG. Residues 145-165 traverse the membrane as a helical segment; it reads AGICLLIIIQLFVAGLIVLLL. Over 166–172 the chain is Cytoplasmic; sequence DELLQKG. The chain crosses the membrane as a helical span at residues 173-193; the sequence is YGLGSGISLFIATNICETIVW. Topologically, residues 194–240 are lumenal; the sequence is KAFSPTTVNTGRGTEFEGAIIALFHLLATRTDKVRALREAFYRQNLP. Residues 241-261 form a helical membrane-spanning segment; it reads NLMNLLATVFVFGVVIYFQGF. The Cytoplasmic portion of the chain corresponds to 262-288; that stretch reads RVDLPIKSARYRGQYNTYPIKLFYTSN. Residues 289 to 309 form a helical membrane-spanning segment; that stretch reads IPIILQSALVSNLYVISQMLS. Over 310-354 the chain is Lumenal; sequence TRFSGNFLVNLLGTWSDTSSGGPARAYPVGGLCYYFSPPESFGSV. Residues 355-375 traverse the membrane as a helical segment; sequence LDDPIHAAIYICFMLGSCAFF. The Cytoplasmic segment spans residues 376 to 420; sequence SKTWIEVSGSSAKDVAKQLKEQQMVMRGHRETSMVHELNRYIPTA. The helical transmembrane segment at 421-441 threads the bilayer; the sequence is AAFGGLCIGGLSVMADFLGAI. Residues 442-445 are Lumenal-facing; sequence GSGT. Residues 446-462 form a helical membrane-spanning segment; that stretch reads GILLAVTIIYQYFEIFV. The Cytoplasmic portion of the chain corresponds to 463 to 476; that stretch reads KEQSEMGSMGALLF.

The protein belongs to the SecY/SEC61-alpha family. As to quaternary structure, the SEC61 channel-forming translocon complex consists of channel-forming core components SEC61A1, SEC61B and SEC61G and different auxiliary components such as SEC62 and SEC63.

It localises to the endoplasmic reticulum membrane. In terms of biological role, component of SEC61 channel-forming translocon complex that mediates transport of signal peptide-containing precursor polypeptides across the endoplasmic reticulum (ER). Forms a ribosome receptor and a gated pore in the ER membrane, both functions required for cotranslational translocation of nascent polypeptides. This is Protein transport protein Sec61 subunit alpha isoform B (sec61ab) from Oncorhynchus mykiss (Rainbow trout).